We begin with the raw amino-acid sequence, 603 residues long: Complement factor I (603 aa).

An N-terminal signal peptide occupies residues 1–18; sequence MKLAHLSLFLLALHLSSS. 20 cysteine pairs are disulfide-bonded: C36-C260, C46-C57, C51-C62, C64-C96, C70-C89, C78-C109, C144-C186, C157-C219, C191-C201, C234-C252, C246-C261, C264-C276, C271-C289, C283-C298, C348-C473, C386-C402, C394-C464, C487-C551, C515-C530, and C541-C570. One can recognise a Kazal-like domain in the interval 58–111; the sequence is IEGTCICKLPYQCPRAGTPVCAMNGRSYPTYCHQKSFECLHPEIKFSHNGTCAA. Residues N106, N116, N174, and N182 are each glycosylated (N-linked (GlcNAc...) asparagine). Positions 117–217 constitute an SRCR domain; it reads VSLIYGRTKT…TELSNGLAGV (101 aa). 2 LDL-receptor class A domains span residues 218–262 and 263–299; these read VCYK…LCCK and GCRGNASLCKSGVCIPDQYKCNGEVDCITGEDESRCE. 6 residues coordinate Ca(2+): K244, N247, V249, D251, D257, and E258. N267 carries N-linked (GlcNAc...) asparagine glycosylation. The Ca(2+) site is built by Y281, N284, E286, D288, D294, and E295. Residues 361–594 enclose the Peptidase S1 domain; sequence VIGGKPANVG…YFDWISYHVG (234 aa). Catalysis depends on charge relay system residues H401 and D449. Residue N514 is glycosylated (N-linked (GlcNAc...) asparagine). S545 functions as the Charge relay system in the catalytic mechanism. N-linked (GlcNAc...) asparagine glycosylation is present at N556.

Belongs to the peptidase S1 family. As to quaternary structure, heterodimer of a light and heavy chains; disulfide-linked. The fully processed and mature protein circulates as a zymogen, and is allosterically activated by substrate-induced remodeling of the active site. Interacts with C3b. Interacts with complement factor H. Expressed in the liver by hepatocytes. Also present in other cells such as monocytes, fibroblasts or keratinocytes.

The protein localises to the secreted. The protein resides in the extracellular space. It catalyses the reaction Inactivates complement subcomponents C3b, iC3b and C4b by proteolytic cleavage.. Its function is as follows. Trypsin-like serine protease that plays an essential role in regulating the immune response by controlling all complement pathways. Inhibits these pathways by cleaving three peptide bonds in the alpha-chain of C3b and two bonds in the alpha-chain of C4b thereby inactivating these proteins. Essential cofactors for these reactions include factor H and C4BP in the fluid phase and membrane cofactor protein/CD46 and CR1 on cell surfaces. The presence of these cofactors on healthy cells allows degradation of deposited C3b by CFI in order to prevent undesired complement activation, while in apoptotic cells or microbes, the absence of such cofactors leads to C3b-mediated complement activation and subsequent opsonization. The polypeptide is Complement factor I (Cfi) (Mus musculus (Mouse)).